The chain runs to 364 residues: Probable dual-specificity RNA methyltransferase RlmN (364 aa).

Glutamate 107 serves as the catalytic Proton acceptor. The Radical SAM core domain occupies 113–346; that stretch reads HDYGNSVCVT…ATIRREQGSD (234 aa). A disulfide bridge connects residues cysteine 120 and cysteine 351. Residues cysteine 127, cysteine 131, and cysteine 134 each coordinate [4Fe-4S] cluster. Residues 177 to 178, serine 209, 232 to 234, and asparagine 308 each bind S-adenosyl-L-methionine; these read GE and SLH. Cysteine 351 (S-methylcysteine intermediate) is an active-site residue.

This sequence belongs to the radical SAM superfamily. RlmN family. [4Fe-4S] cluster serves as cofactor.

The protein resides in the cytoplasm. It catalyses the reaction adenosine(2503) in 23S rRNA + 2 reduced [2Fe-2S]-[ferredoxin] + 2 S-adenosyl-L-methionine = 2-methyladenosine(2503) in 23S rRNA + 5'-deoxyadenosine + L-methionine + 2 oxidized [2Fe-2S]-[ferredoxin] + S-adenosyl-L-homocysteine. The catalysed reaction is adenosine(37) in tRNA + 2 reduced [2Fe-2S]-[ferredoxin] + 2 S-adenosyl-L-methionine = 2-methyladenosine(37) in tRNA + 5'-deoxyadenosine + L-methionine + 2 oxidized [2Fe-2S]-[ferredoxin] + S-adenosyl-L-homocysteine. In terms of biological role, specifically methylates position 2 of adenine 2503 in 23S rRNA and position 2 of adenine 37 in tRNAs. Confers resistance to some classes of antibiotics. The sequence is that of Probable dual-specificity RNA methyltransferase RlmN from Staphylococcus aureus (strain Mu3 / ATCC 700698).